Consider the following 155-residue polypeptide: 6,7-dimethyl-8-ribityllumazine synthase (155 aa).

5-amino-6-(D-ribitylamino)uracil contacts are provided by residues F22, 57–59 (AVE), and 81–83 (TVI). Position 86–87 (86–87 (GT)) interacts with (2S)-2-hydroxy-3-oxobutyl phosphate. H89 serves as the catalytic Proton donor. A 5-amino-6-(D-ribitylamino)uracil-binding site is contributed by F114. R128 is a (2S)-2-hydroxy-3-oxobutyl phosphate binding site.

Belongs to the DMRL synthase family. In terms of assembly, forms an icosahedral capsid composed of 60 subunits, arranged as a dodecamer of pentamers.

It catalyses the reaction (2S)-2-hydroxy-3-oxobutyl phosphate + 5-amino-6-(D-ribitylamino)uracil = 6,7-dimethyl-8-(1-D-ribityl)lumazine + phosphate + 2 H2O + H(+). The protein operates within cofactor biosynthesis; riboflavin biosynthesis; riboflavin from 2-hydroxy-3-oxobutyl phosphate and 5-amino-6-(D-ribitylamino)uracil: step 1/2. In terms of biological role, catalyzes the formation of 6,7-dimethyl-8-ribityllumazine by condensation of 5-amino-6-(D-ribitylamino)uracil with 3,4-dihydroxy-2-butanone 4-phosphate. This is the penultimate step in the biosynthesis of riboflavin. The sequence is that of 6,7-dimethyl-8-ribityllumazine synthase from Psychromonas ingrahamii (strain DSM 17664 / CCUG 51855 / 37).